Here is a 149-residue protein sequence, read N- to C-terminus: Transcriptional regulator MraZ (149 aa).

SpoVT-AbrB domains follow at residues 7–54 and 83–126; these read KYVN…GISH and AVQL…QPQN.

The protein belongs to the MraZ family. Forms oligomers.

It localises to the cytoplasm. The protein resides in the nucleoid. The protein is Transcriptional regulator MraZ of Rickettsia rickettsii (strain Sheila Smith).